Consider the following 284-residue polypeptide: Bifunctional protein FolD (284 aa).

NADP(+)-binding positions include 165–167 (GRS), S190, and I231.

It belongs to the tetrahydrofolate dehydrogenase/cyclohydrolase family. Homodimer.

The enzyme catalyses (6R)-5,10-methylene-5,6,7,8-tetrahydrofolate + NADP(+) = (6R)-5,10-methenyltetrahydrofolate + NADPH. It catalyses the reaction (6R)-5,10-methenyltetrahydrofolate + H2O = (6R)-10-formyltetrahydrofolate + H(+). Its pathway is one-carbon metabolism; tetrahydrofolate interconversion. Catalyzes the oxidation of 5,10-methylenetetrahydrofolate to 5,10-methenyltetrahydrofolate and then the hydrolysis of 5,10-methenyltetrahydrofolate to 10-formyltetrahydrofolate. The sequence is that of Bifunctional protein FolD from Lysinibacillus sphaericus (strain C3-41).